A 364-amino-acid chain; its full sequence is tRNA N6-adenosine threonylcarbamoyltransferase (364 aa).

Fe cation contacts are provided by histidine 115 and histidine 119. Residues 137 to 141, aspartate 170, glycine 183, and asparagine 288 each bind substrate; that span reads LVSGG. Residue aspartate 316 coordinates Fe cation.

It belongs to the KAE1 / TsaD family. It depends on Fe(2+) as a cofactor.

The protein resides in the cytoplasm. The enzyme catalyses L-threonylcarbamoyladenylate + adenosine(37) in tRNA = N(6)-L-threonylcarbamoyladenosine(37) in tRNA + AMP + H(+). Its function is as follows. Required for the formation of a threonylcarbamoyl group on adenosine at position 37 (t(6)A37) in tRNAs that read codons beginning with adenine. Is involved in the transfer of the threonylcarbamoyl moiety of threonylcarbamoyl-AMP (TC-AMP) to the N6 group of A37, together with TsaE and TsaB. TsaD likely plays a direct catalytic role in this reaction. The protein is tRNA N6-adenosine threonylcarbamoyltransferase of Bartonella bacilliformis (strain ATCC 35685 / KC583 / Herrer 020/F12,63).